The chain runs to 353 residues: Aliphatic aldoxime dehydratase (353 aa).

S219 is an an aliphatic aldoxime binding site. H299 provides a ligand contact to heme b. H320 lines the an aliphatic aldoxime pocket. H320 is a catalytic residue.

It belongs to the heme-containing dehydratase family. Homodimer. It depends on heme b as a cofactor.

The catalysed reaction is an aliphatic aldoxime = a nitrile + H2O. Its activity is regulated as follows. Active when the heme iron is in the ferrous state. The activity is enhanced by reducing agents, such as Na(2)S, Na(2)S(2)(O4), 2-mercaptoethanol, and L-cysteine and supplementary additions of electron acceptors such as flavins, sulfite ion, and vitamin K3. The effect of various chemicals on the enzyme activity is different in the presence and absence of the reducing reagent, Na(2)S, which acts not only as a reductant but also changes the substrate specificity of the enzyme. Its function is as follows. Catalyzes the dehydration of aldoximes to their corresponding nitrile. Is active toward various arylalkyl- and alkyl-aldoximes, and to a lesser extent toward aryl-aldoximes. In Rhodococcus erythropolis (Arthrobacter picolinophilus), this protein is Aliphatic aldoxime dehydratase.